Consider the following 97-residue polypeptide: Secreted LysM effector Mg1LysM (97 aa).

The first 18 residues, 1 to 18, serve as a signal peptide directing secretion; the sequence is MQFTALVAALLSVAAVQA. In terms of domain architecture, LysM spans 37–84; sequence QQYVARSGDTLTKIAQEIYHDVVGVCDIARANNLADPNRIDAGTPYTI. Positions 44, 48, 74, and 76 each coordinate chitin.

This sequence belongs to the secreted LysM effector family. Forms homodimers in a chitin-independent manner through interactions at the N-termini of Mg1LysM monomers. Homodimers are further polymerized in a chitin-dependent manner.

It is found in the secreted. It localises to the cell wall. Functionally, secreted effector that enables the plant pathogenic fungus to manipulate host defenses for successful infection. Binds chitin but not cellulose or xylan. Chitin-induced polymerization of homodimers forms a contiguous Mg1LysM highly oligomeric super-complexe that is anchored to the chitin in the fungal cell wall to prevent hydrolysis by host chitinases. The chain is Secreted LysM effector Mg1LysM from Zymoseptoria tritici (strain ST99CH_3D7).